We begin with the raw amino-acid sequence, 1345 residues long: Membrane-anchored lipid-binding protein LAM4 (1345 aa).

At 1–1197 (MTRDSKKKHH…NFSSEIFMNK (1197 aa)) the chain is on the cytoplasmic side. 7 disordered regions span residues 51 to 80 (RVGG…KAAA), 115 to 134 (SLKG…PSLS), 139 to 164 (EKEK…DGHD), 190 to 302 (DADN…SLDD), 356 to 397 (LPEA…KPRR), 425 to 447 (SFNS…PREM), and 489 to 531 (STII…NGRQ). T66 carries the phosphothreonine modification. Positions 216–228 (SENSTNNKNTSST) are enriched in low complexity. The span at 246-271 (SKSSTPSNQQLNTTEAGSKSKPSSLS) shows a compositional bias: polar residues. A compositionally biased stretch (low complexity) spans 283 to 294 (HSNSHSSSNAIS). The segment covering 425-436 (SFNSSNGLTNND) has biased composition (polar residues). Residues 498-516 (SNGRPSSGLRRSSSKSFSS) show a composition bias toward low complexity. The GRAM domain occupies 549 to 616 (EFHAIFKDSG…FKTIVQIEKR (68 aa)). Positions 665–677 (SNSNNTNSSSNSI) are enriched in low complexity. The interval 665–722 (SNSNNTNSSSNSISDDENDDYDDDYDDYGDDDDDLYDNSNNISDSTDMTSSVSIGKPE) is disordered. A compositionally biased stretch (acidic residues) spans 678–700 (SDDENDDYDDDYDDYGDDDDDLY). A Phosphoserine modification is found at S747. VASt domains lie at 758 to 930 (NEKL…TRSA) and 967 to 1139 (DDSI…SRAK). A disordered region spans residues 930–963 (ATKRKRSSKENTVTVSTLPKMEPSSHAPTEPDIQ). Residues 1141–1158 (KKPVKKVMKSHDKHRPFH) show a composition bias toward basic residues. Positions 1141–1172 (KKPVKKVMKSHDKHRPFHSKVEQKSSESRKSD) are disordered. Residues 1159-1172 (SKVEQKSSESRKSD) show a composition bias toward basic and acidic residues. The chain crosses the membrane as a helical span at residues 1198-1218 (LLSPQKLFLILGLTIMLFWSP). Residues 1219–1345 (RLHVFQEKNN…NIERDANDLS (127 aa)) lie on the Lumenal side of the membrane.

This sequence belongs to the YSP2 family.

It is found in the endoplasmic reticulum membrane. May be involved in sterol transfer between intracellular membranes. This Saccharomyces cerevisiae (strain ATCC 204508 / S288c) (Baker's yeast) protein is Membrane-anchored lipid-binding protein LAM4.